Consider the following 320-residue polypeptide: Cytochrome f (320 aa).

The N-terminal stretch at 1–35 is a signal peptide; the sequence is MQTRNTLSWIREEITRSISVSLMIYIITWASISSA. The heme site is built by Tyr-36, Cys-56, Cys-59, and His-60. The helical transmembrane segment at 286-306 threads the bilayer; the sequence is VQGLLFFLGSVVLAQIFLVLK.

This sequence belongs to the cytochrome f family. In terms of assembly, the 4 large subunits of the cytochrome b6-f complex are cytochrome b6, subunit IV (17 kDa polypeptide, petD), cytochrome f and the Rieske protein, while the 4 small subunits are PetG, PetL, PetM and PetN. The complex functions as a dimer. It depends on heme as a cofactor.

It is found in the plastid. Its subcellular location is the chloroplast thylakoid membrane. Its function is as follows. Component of the cytochrome b6-f complex, which mediates electron transfer between photosystem II (PSII) and photosystem I (PSI), cyclic electron flow around PSI, and state transitions. The chain is Cytochrome f from Olimarabidopsis pumila (Dwarf rocket).